Reading from the N-terminus, the 259-residue chain is DNA-directed RNA polymerase 30 kDa polypeptide (259 aa).

The segment at 155–195 adopts a TFIIS-type zinc-finger fold; that stretch reads YNTPCPNCKSRNTTPMMIQTRAADEPPLVRHACRDCKQHFK. Zn(2+) is bound by residues Cys-159, Cys-162, Cys-187, and Cys-190. Residues 220-259 form a disordered region; sequence EILPDNNPSPPESPEPASPIDDGLIRATFDRNDEPPEDDE. The segment covering 226 to 236 has biased composition (pro residues); that stretch reads NPSPPESPEPA.

It belongs to the poxviridae DNA-directed RNA polymerase 30 kDa subunit family. The DNA-dependent RNA polymerase (vRNAP) consists of eight subunits encoded by early viral genes and termed according to their apparent molecular masses Rpo147, Rpo132, Rpo35, Rpo30, Rpo22, Rpo19, Rpo18, and Rpo7. The same holoenzyme, with the addition of the transcription-specificity factor RAP94, is used for early gene expression.

The protein localises to the virion. It localises to the host cytoplasm. It catalyses the reaction RNA(n) + a ribonucleoside 5'-triphosphate = RNA(n+1) + diphosphate. In terms of biological role, part of the DNA-dependent RNA polymerase which catalyzes the transcription of viral DNA into RNA using the four ribonucleoside triphosphates as substrates. Responsible for the transcription of early, intermediate and late genes. DNA-dependent RNA polymerase associates with the early transcription factor (ETF), itself composed of OPG118 and OPG134, thereby allowing the early genes transcription. Late transcription, and probably also intermediate transcription, require newly synthesized RNA polymerase. This is DNA-directed RNA polymerase 30 kDa polypeptide (OPG066) from Bos taurus (Bovine).